The chain runs to 520 residues: MKPEDFRASATRPFTGEEYLASLRDDREIYIYGDRVKDVTSHPAFRNAAASMARLYDALHDPQSKEKLCWETDTGNGGYTHKFFRYARSADELRQQRDAIAEWSRLTYGWMGRTPDYKAAFGSALGANPGFYGRFEDNAKTWYKRIQEACLYLNHAIVNPPIDRDKPVDQVKDVFISVDEEVDGGIVVSGAKVVATNSALTHYNFVGQGSAQLLGDNTDFALMFIAPMNTPGMKLICRPSYELVAGIAGSPFDYPLSSRFDENDAILVMDKVFIPWENVLIYRDFERCKQWFPQGGFGRLFPMQGCTRLAVKLDFITGALYKALQCTGSLEFRGVQAQVGEVVAWRNLFWSLTDAMYGNASEWHGGAFLPSAEALQAYRVLAPQAYPEIKKTIEQVVASGLIYLPSGVRDLHNPQLDKYLSTYCRGSGGMGHRERIKILKLLWDAIGSEFGGRHELYEINYAGSQDEIRMQALRQAIGSGAMKGMLGMVEQCMGDYDENGWTVPHLHNPDDINVLDRIRQ.

FAD is bound by residues 155–157 (HAI) and Thr-196.

Belongs to the FADH(2)-utilizing monooxygenase family. In terms of assembly, homodimer. HPA 3-hydroxylase consists of a reductase component HpaC and an oxygenase component HpaB. Some form of interactions between the reductase and the oxygenase facilitate the transfer of FADH(-) to the oxygenase in P.aeruginosa, although interactions are not required in other species.

It carries out the reaction 4-hydroxyphenylacetate + FADH2 + O2 = 3,4-dihydroxyphenylacetate + FAD + H2O + H(+). Its pathway is aromatic compound metabolism; 4-hydroxyphenylacetate degradation; pyruvate and succinate semialdehyde from 4-hydroxyphenylacetate: step 1/7. In terms of biological role, oxygenase component of the 4-hydroxyphenylacetate (HPA) 3-hydroxylase. Catalyzes the hydroxylation of 4-hydroxyphenylacetate to form 3,4-dihydroxyphenylacetate, using FADH(-) provided by the reductase component HpaC to activate oxygen. To a lesser extent, can also use reduced FMN. In vitro, has hydroxylation activity toward tyrosol and various cinnamic acid derivatives, catalyzing the hydroxylation of p-coumaric acid, caffeic acid, ferulic acid, and coniferaldehyde. The protein is 4-hydroxyphenylacetate 3-monooxygenase oxygenase component of Pseudomonas aeruginosa (strain ATCC 15692 / DSM 22644 / CIP 104116 / JCM 14847 / LMG 12228 / 1C / PRS 101 / PAO1).